A 166-amino-acid chain; its full sequence is Interferon gamma (166 aa).

Positions 1-23 (MNYTSYILAFQLCVILCSSGCNC) are cleaved as a signal peptide. A Pyrrolidone carboxylic acid modification is found at Gln-24. Residues Asn-39 and Asn-106 are each glycosylated (N-linked (GlcNAc...) asparagine).

It belongs to the type II (or gamma) interferon family. In terms of assembly, homodimer. Interacts with IFNGR1 (via extracellular domain); this interaction promotes IFNGR1 dimerization. Released primarily from activated T lymphocytes.

Its subcellular location is the secreted. Functionally, type II interferon produced by immune cells such as T-cells and NK cells that plays crucial roles in antimicrobial, antiviral, and antitumor responses by activating effector immune cells and enhancing antigen presentation. Primarily signals through the JAK-STAT pathway after interaction with its receptor IFNGR1 to affect gene regulation. Upon IFNG binding, IFNGR1 intracellular domain opens out to allow association of downstream signaling components JAK2, JAK1 and STAT1, leading to STAT1 activation, nuclear translocation and transcription of IFNG-regulated genes. Many of the induced genes are transcription factors such as IRF1 that are able to further drive regulation of a next wave of transcription. Plays a role in class I antigen presentation pathway by inducing a replacement of catalytic proteasome subunits with immunoproteasome subunits. In turn, increases the quantity, quality, and repertoire of peptides for class I MHC loading. Increases the efficiency of peptide generation also by inducing the expression of activator PA28 that associates with the proteasome and alters its proteolytic cleavage preference. Up-regulates as well MHC II complexes on the cell surface by promoting expression of several key molecules such as cathepsins B/CTSB, H/CTSH, and L/CTSL. Participates in the regulation of hematopoietic stem cells during development and under homeostatic conditions by affecting their development, quiescence, and differentiation. The sequence is that of Interferon gamma (IFNG) from Canis lupus familiaris (Dog).